A 103-amino-acid chain; its full sequence is Hexon-interlacing protein (103 aa).

A disordered region spans residues 25-45 (RQNVTGSDLGGKPVPSDVLES). Residues 72–99 (LDDLKTQVAAMQNSVTAIQEELKDLKQR) adopt a coiled-coil conformation.

The protein belongs to the adenoviridae hexon-interlacing protein family. Homotrimer. Interacts with hexon protein; this interaction tethers the hexons together. Self-interacts with adjacent proteins. Interacts with kinesin light chain KLC1; this interaction leads to capsid disruption at the nuclear pore complex during virus entry into host cell.

The protein resides in the virion. Its subcellular location is the host nucleus. Structural component of the virion that acts as a cement protein on the capsid exterior and forms triskelion structures consisting of three molecules that stabilize three hexon trimers at the center of each icosahedral facet and fixes the peripentonal hexons. Dispensable for assembly. During virus entry, recruits the anterograde motor kinesin-1 to the capsid docked at the nuclear pore complex thereby subjecting the docked capsid to a pulling force. The resulting tension leads to capsid disruption, dispersion of capsid fragments toward cell periphery and eventually viral DNA entry into the host nucleus. The polypeptide is Hexon-interlacing protein (Canine adenovirus serotype 1 (strain CLL) (CAdV-1)).